We begin with the raw amino-acid sequence, 435 residues long: GTPase Obg (435 aa).

One can recognise an Obg domain in the interval 6–164 (ADFVDRVKIF…RWLELELKIL (159 aa)). Residues 165-335 (ADVGLVGYPN…LVSKLASIVR (171 aa)) enclose the OBG-type G domain. Residues 171–178 (GYPNVGKS), 196–200 (FTTLI), 217–220 (DIPG), 287–290 (NKID), and 316–318 (SAL) contribute to the GTP site. Residues Ser178 and Thr198 each coordinate Mg(2+). The OCT domain occupies 357–435 (RRLPEKFHLE…IGDFEFEYRE (79 aa)).

Belongs to the TRAFAC class OBG-HflX-like GTPase superfamily. OBG GTPase family. As to quaternary structure, monomer. It depends on Mg(2+) as a cofactor.

The protein localises to the cytoplasm. Its function is as follows. An essential GTPase which binds GTP, GDP and possibly (p)ppGpp with moderate affinity, with high nucleotide exchange rates and a fairly low GTP hydrolysis rate. Plays a role in control of the cell cycle, stress response, ribosome biogenesis and in those bacteria that undergo differentiation, in morphogenesis control. In Thermotoga sp. (strain RQ2), this protein is GTPase Obg.